The chain runs to 86 residues: Omega-theraphotoxin-Hhn1c (86 aa).

Positions 1 to 21 are cleaved as a signal peptide; the sequence is MKSIVFVALFGLALLAVVCSA. The propeptide occupies 22–50; sequence SEDAHKELLKEVVRAMVVDKTDAVQAEER. Disulfide bonds link C52–C66, C59–C71, and C65–C78.

The protein belongs to the neurotoxin 10 (Hwtx-1) family. 17 (Hntx-9) subfamily. As to expression, expressed by the venom gland.

The protein resides in the secreted. Ion channel inhibitor. In Cyriopagopus hainanus (Chinese bird spider), this protein is Omega-theraphotoxin-Hhn1c.